We begin with the raw amino-acid sequence, 146 residues long: Globin-1 (146 aa).

Positions 9–146 constitute a Globin domain; that stretch reads QLTADVKKDL…KLVAVVQAAL (138 aa). Histidine 101 contributes to the heme b binding site.

Belongs to the globin family. In terms of assembly, homodimer.

The protein localises to the cytoplasm. The chain is Globin-1 from Anadara broughtonii (Blood clam).